Consider the following 807-residue polypeptide: Tyrosine-protein phosphatase non-receptor type 22 (807 aa).

The Tyrosine-protein phosphatase domain maps to 24 to 289 (FANEFLKLKR…ELVYNAVLEL (266 aa)). Ser35 carries the post-translational modification Phosphoserine; by PKC/PRKCD. Cys129 and Cys227 are joined by a disulfide. Cys227 functions as the Phosphocysteine intermediate in the catalytic mechanism. Substrate contacts are provided by residues 227–233 (CSAGCGR) and Gln274. Ser449, Ser635, Ser684, and Ser692 each carry phosphoserine. Disordered regions lie at residues 676 to 700 (SVKL…LPER) and 724 to 746 (SYPD…GKSF).

It belongs to the protein-tyrosine phosphatase family. Non-receptor class 4 subfamily. Interacts with CSK. Interacts with LPXN. Interacts with CBL. Interacts with TRAF3 (via MATH domain); the interaction promotes TRAF3 polyubiquitination. In terms of processing, phosphorylation on Ser-35 by PKC/PRKCD abrogates its ability to dephosphorylate and inactivate the SRC family kinases. Expressed in bone marrow, B and T-cells, PBMCs, natural killer cells, monocytes, dendritic cells and neutrophils. Both isoform 1 and 4 are predominantly expressed in lymphoid tissues and cells. Isoform 1 is expressed in thymocytes and both mature B and T-cells.

It is found in the cytoplasm. The enzyme catalyses O-phospho-L-tyrosyl-[protein] + H2O = L-tyrosyl-[protein] + phosphate. The catalysed reaction is N-(5Z,8Z,11Z,14Z-eicosatetraenoyl)-ethanolamine phosphate + H2O = N-(5Z,8Z,11Z,14Z-eicosatetraenoyl)-ethanolamine + phosphate. Down-regulated by phosphorylation. Acts as a negative regulator of T-cell receptor (TCR) signaling by direct dephosphorylation of the Src family kinases LCK and FYN, ITAMs of the TCRz/CD3 complex, as well as ZAP70, VAV, VCP and other key signaling molecules. Associates with and probably dephosphorylates CBL. Dephosphorylates LCK at its activating 'Tyr-394' residue. Dephosphorylates ZAP70 at its activating 'Tyr-493' residue. Dephosphorylates the immune system activator SKAP2. Positively regulates toll-like receptor (TLR)-induced type 1 interferon production. Promotes host antiviral responses mediated by type 1 interferon. Regulates NOD2-induced pro-inflammatory cytokine secretion and autophagy. Acts as an activator of NLRP3 inflammasome assembly by mediating dephosphorylation of 'Tyr-861' of NLRP3. Dephosphorylates phospho-anandamide (p-AEA), an endocannabinoid to anandamide (also called N-arachidonoylethanolamide). The polypeptide is Tyrosine-protein phosphatase non-receptor type 22 (PTPN22) (Homo sapiens (Human)).